Reading from the N-terminus, the 157-residue chain is Ribonuclease H (157 aa).

In terms of domain architecture, RNase H type-1 spans 1 to 142 (MKKKIKIFID…CDFLAKISAK (142 aa)). Positions 10, 48, 70, and 134 each coordinate Mg(2+).

It belongs to the RNase H family. In terms of assembly, monomer. Mg(2+) is required as a cofactor.

Its subcellular location is the cytoplasm. The catalysed reaction is Endonucleolytic cleavage to 5'-phosphomonoester.. Functionally, endonuclease that specifically degrades the RNA of RNA-DNA hybrids. This chain is Ribonuclease H, found in Wigglesworthia glossinidia brevipalpis.